A 757-amino-acid chain; its full sequence is Cellulose synthase-like protein B1 (757 aa).

2 helical membrane-spanning segments follow: residues 18-38 and 50-70; these read TNYF…SLLL and VWLV…LITC. Residue aspartate 136 is part of the active site. A coiled-coil region spans residues 186 to 216; sequence EFNRDWEKTKREYEKLRRKVEDATGDSHMLD. The active site involves aspartate 462. A run of 6 helical transmembrane segments spans residues 533 to 553, 569 to 589, 615 to 635, 674 to 694, 710 to 730, and 737 to 757; these read LAYL…YCLL, LYLG…LWEF, LFSI…VFII, FLPG…FSVG, AEAC…MGLF, and TPLS…VFSV.

It belongs to the glycosyltransferase 2 family. Plant cellulose synthase-like B subfamily. As to expression, expressed in young seedlings, primarily in the vascular tissue.

The protein resides in the golgi apparatus membrane. Its function is as follows. Thought to be a Golgi-localized beta-glycan synthase that polymerize the backbones of noncellulosic polysaccharides (hemicelluloses) of plant cell wall. The sequence is that of Cellulose synthase-like protein B1 (CSLB1) from Arabidopsis thaliana (Mouse-ear cress).